The chain runs to 284 residues: Syntaxin-like protein psy1 (284 aa).

Positions 23 to 57 form a coiled coil; sequence EEIDHIRDAIRQIEDNVGRIEMLHQQSLQEIDEAN. Residues 181-243 enclose the t-SNARE coiled-coil homology domain; it reads LREVQERHAD…GEGTQHMDRA (63 aa). The chain crosses the membrane as a helical; Anchor for type IV membrane protein span at residues 260–280; the sequence is ICVVIICVIVAVLCGVLIPVL.

The protein belongs to the syntaxin family.

It is found in the cell membrane. It localises to the prospore membrane. The chain is Syntaxin-like protein psy1 (psy1) from Schizosaccharomyces pombe (strain 972 / ATCC 24843) (Fission yeast).